We begin with the raw amino-acid sequence, 247 residues long: MTHRDDLFSAPIASLGDWTFDERVAEVFPDMIQRSVPGYSNIISMIGMLAGRFARPGTQIYDLGCALGAATLAMRRTISHGDCRIIAVDNSPAMIDRCRRHISAFHATTPTEIIEDDISTVPIENASLVVLNFTMQFLEPAQRQTLLNRIYAGLNTGGALVLSEKFSFQDQLIGGLLFDMHHDFKRANGYSELEISQKRSMLENVMLTDTVEVHKQRLVEAGFGHAELWFQCFNFGSLISIKPESGQ.

Residues tyrosine 39, 89 to 90 (DN), 117 to 118 (DI), asparagine 132, and arginine 199 contribute to the S-adenosyl-L-methionine site.

This sequence belongs to the class I-like SAM-binding methyltransferase superfamily. Cx-SAM synthase family. Homodimer.

It carries out the reaction prephenate + S-adenosyl-L-methionine = carboxy-S-adenosyl-L-methionine + 3-phenylpyruvate + H2O. Its function is as follows. Catalyzes the conversion of S-adenosyl-L-methionine (SAM) to carboxy-S-adenosyl-L-methionine (Cx-SAM). This is Carboxy-S-adenosyl-L-methionine synthase from Sodalis glossinidius (strain morsitans).